The following is a 324-amino-acid chain: MNVAPEPGAAGAAAPQGRKLLRLEVRNAQTPIERKPPWIRTRARMGPEYTELKNLVRREGLHTVCEEAGCPNIFECWEDREATFLIGGDQCTRRCDFCQIDTGKPAPLDRDEPRRVAESVHTMGLRYATVTGVARDDLPDGGAWLYAETVRAIKELNPSTGVELLIPDFNGKADQLGEVFEARPEVLAHNVETVPRVFKRIRPAFTYQRSLDVLTAARQFGLVTKSNLILGMGETPEEVRTALVDLHDAGCDIITITQYLRPSPRHHPVERWVRPEEFVEFAQYAEGLGFAGVLAGPLVRSSYRAGRLYEQARSRNTSGASNSG.

[4Fe-4S] cluster-binding residues include C65, C70, C76, C91, C95, C98, and S302. In terms of domain architecture, Radical SAM core spans 77 to 291 (WEDREATFLI…AQYAEGLGFA (215 aa)).

It belongs to the radical SAM superfamily. Lipoyl synthase family. Requires [4Fe-4S] cluster as cofactor.

It is found in the cytoplasm. It catalyses the reaction [[Fe-S] cluster scaffold protein carrying a second [4Fe-4S](2+) cluster] + N(6)-octanoyl-L-lysyl-[protein] + 2 oxidized [2Fe-2S]-[ferredoxin] + 2 S-adenosyl-L-methionine + 4 H(+) = [[Fe-S] cluster scaffold protein] + N(6)-[(R)-dihydrolipoyl]-L-lysyl-[protein] + 4 Fe(3+) + 2 hydrogen sulfide + 2 5'-deoxyadenosine + 2 L-methionine + 2 reduced [2Fe-2S]-[ferredoxin]. It functions in the pathway protein modification; protein lipoylation via endogenous pathway; protein N(6)-(lipoyl)lysine from octanoyl-[acyl-carrier-protein]: step 2/2. Its function is as follows. Catalyzes the radical-mediated insertion of two sulfur atoms into the C-6 and C-8 positions of the octanoyl moiety bound to the lipoyl domains of lipoate-dependent enzymes, thereby converting the octanoylated domains into lipoylated derivatives. The protein is Lipoyl synthase of Mycobacterium ulcerans (strain Agy99).